The chain runs to 116 residues: Ribonuclease P protein component (116 aa).

Belongs to the RnpA family. In terms of assembly, consists of a catalytic RNA component (M1 or rnpB) and a protein subunit.

The enzyme catalyses Endonucleolytic cleavage of RNA, removing 5'-extranucleotides from tRNA precursor.. In terms of biological role, RNaseP catalyzes the removal of the 5'-leader sequence from pre-tRNA to produce the mature 5'-terminus. It can also cleave other RNA substrates such as 4.5S RNA. The protein component plays an auxiliary but essential role in vivo by binding to the 5'-leader sequence and broadening the substrate specificity of the ribozyme. The chain is Ribonuclease P protein component from Bacillus velezensis (strain DSM 23117 / BGSC 10A6 / LMG 26770 / FZB42) (Bacillus amyloliquefaciens subsp. plantarum).